The chain runs to 567 residues: Proline--tRNA ligase (567 aa).

This sequence belongs to the class-II aminoacyl-tRNA synthetase family. ProS type 1 subfamily. Homodimer.

The protein localises to the cytoplasm. It carries out the reaction tRNA(Pro) + L-proline + ATP = L-prolyl-tRNA(Pro) + AMP + diphosphate. Its function is as follows. Catalyzes the attachment of proline to tRNA(Pro) in a two-step reaction: proline is first activated by ATP to form Pro-AMP and then transferred to the acceptor end of tRNA(Pro). As ProRS can inadvertently accommodate and process non-cognate amino acids such as alanine and cysteine, to avoid such errors it has two additional distinct editing activities against alanine. One activity is designated as 'pretransfer' editing and involves the tRNA(Pro)-independent hydrolysis of activated Ala-AMP. The other activity is designated 'posttransfer' editing and involves deacylation of mischarged Ala-tRNA(Pro). The misacylated Cys-tRNA(Pro) is not edited by ProRS. This chain is Proline--tRNA ligase, found in Staphylococcus aureus (strain USA300).